Reading from the N-terminus, the 662-residue chain is DNA ligase (662 aa).

Residues 34–38 (DYEYD), 83–84 (SI), and Glu-113 contribute to the NAD(+) site. Residue Lys-115 is the N6-AMP-lysine intermediate of the active site. Positions 136, 172, 286, and 310 each coordinate NAD(+). 4 residues coordinate Zn(2+): Cys-404, Cys-407, Cys-422, and Cys-427. The 80-residue stretch at 583-662 (KSGSTCFGKA…EAFTNLIHLE (80 aa)) folds into the BRCT domain.

The protein belongs to the NAD-dependent DNA ligase family. LigA subfamily. The cofactor is Mg(2+). Mn(2+) serves as cofactor.

It carries out the reaction NAD(+) + (deoxyribonucleotide)n-3'-hydroxyl + 5'-phospho-(deoxyribonucleotide)m = (deoxyribonucleotide)n+m + AMP + beta-nicotinamide D-nucleotide.. Its function is as follows. DNA ligase that catalyzes the formation of phosphodiester linkages between 5'-phosphoryl and 3'-hydroxyl groups in double-stranded DNA using NAD as a coenzyme and as the energy source for the reaction. It is essential for DNA replication and repair of damaged DNA. In Chlamydia pneumoniae (Chlamydophila pneumoniae), this protein is DNA ligase.